Here is a 483-residue protein sequence, read N- to C-terminus: Type 2 glycosyltransferase (483 aa).

A helical transmembrane segment spans residues 21 to 41 (AVVYLSALFTPWFTAFCVLWL). The short motif at 156-158 (DDD) is the Dxd motif element. A QxxxRW motif motif is present at residues 301-305 (QCSRW). A glycan (N-linked (GlcNAc...) asparagine) is linked at Asn-313. Helical transmembrane passes span 336–356 (IATF…ALWW), 369–389 (AIYA…VGLF), and 396–416 (IMFL…KIYA). A glycan (N-linked (GlcNAc...) asparagine) is linked at Asn-421.

It belongs to the GT2 glycosyltransferase family.

The protein resides in the cell membrane. In terms of biological role, glycosyltransferase that plays an important role in infection-related morphogenesis and pathogenesis. Involved in stress tolerance and hyphal hydrophobicity via its regulation of the expression of nydrophobin MPG1. May regulate growth, pathogenicity, and cell wall integrity (CWI) through glycosylation of heat shock protein SSB1, and other (unidentified) substrates may contribute to conidiation. Candidate proteins as potential substrates of GT2 include several heat shock proteins (SSB1/MGG_02503, MGG_06759 and MGG_06958), two coiled-coil domain-containing proteins (MGG_04321 and MGG_09571), aminopeptidase 2 (MGG_16472), and a nuclease domain-containing protein (MGG_12646). The sequence is that of Type 2 glycosyltransferase from Pyricularia oryzae (strain 70-15 / ATCC MYA-4617 / FGSC 8958) (Rice blast fungus).